Consider the following 413-residue polypeptide: Peptidase T (413 aa).

His-84 serves as a coordination point for Zn(2+). The active site involves Asp-86. Asp-147 contacts Zn(2+). Glu-181 functions as the Proton acceptor in the catalytic mechanism. Residues Glu-182, Asp-204, and His-386 each coordinate Zn(2+).

Belongs to the peptidase M20B family. Zn(2+) is required as a cofactor.

The protein resides in the cytoplasm. It carries out the reaction Release of the N-terminal residue from a tripeptide.. In terms of biological role, cleaves the N-terminal amino acid of tripeptides. This chain is Peptidase T, found in Ligilactobacillus salivarius (strain UCC118) (Lactobacillus salivarius).